Here is a 145-residue protein sequence, read N- to C-terminus: Deoxyuridine 5'-triphosphate nucleotidohydrolase (145 aa).

Substrate-binding positions include 64–66 (RSG), Asn-77, 81–83 (TID), and Met-91.

It belongs to the dUTPase family. Mg(2+) is required as a cofactor.

It carries out the reaction dUTP + H2O = dUMP + diphosphate + H(+). It functions in the pathway pyrimidine metabolism; dUMP biosynthesis; dUMP from dCTP (dUTP route): step 2/2. This enzyme is involved in nucleotide metabolism: it produces dUMP, the immediate precursor of thymidine nucleotides and it decreases the intracellular concentration of dUTP so that uracil cannot be incorporated into DNA. The chain is Deoxyuridine 5'-triphosphate nucleotidohydrolase from Leptospira borgpetersenii serovar Hardjo-bovis (strain JB197).